Consider the following 212-residue polypeptide: Nucleoside triphosphate pyrophosphatase (212 aa).

Residue aspartate 79 is the Proton acceptor of the active site.

Belongs to the Maf family. It depends on a divalent metal cation as a cofactor.

Its subcellular location is the cytoplasm. The catalysed reaction is a ribonucleoside 5'-triphosphate + H2O = a ribonucleoside 5'-phosphate + diphosphate + H(+). The enzyme catalyses a 2'-deoxyribonucleoside 5'-triphosphate + H2O = a 2'-deoxyribonucleoside 5'-phosphate + diphosphate + H(+). Functionally, nucleoside triphosphate pyrophosphatase. May have a dual role in cell division arrest and in preventing the incorporation of modified nucleotides into cellular nucleic acids. The chain is Nucleoside triphosphate pyrophosphatase from Nocardia farcinica (strain IFM 10152).